A 171-amino-acid polypeptide reads, in one-letter code: UPF0690 protein C1orf52 homolog A (171 aa).

Disordered stretches follow at residues 1 to 56 (MAAE…GPDE) and 126 to 171 (NVYQ…KRKV). Basic and acidic residues predominate over residues 47-56 (EAKKLPGPDE). The span at 146-160 (EEEAQEDSPPSDDEQ) shows a compositional bias: acidic residues.

It belongs to the UPF0690 family.

This is UPF0690 protein C1orf52 homolog A from Xenopus laevis (African clawed frog).